The primary structure comprises 45 residues: uncharacterized protein (45 aa).

This is an uncharacterized protein from Treponema pallidum (strain Nichols).